The primary structure comprises 194 residues: uncharacterized protein (194 aa).

This is an uncharacterized protein from Gallus gallus (Chicken).